The primary structure comprises 326 residues: Regulation of nuclear pre-mRNA domain-containing protein 1B (326 aa).

Residue serine 2 is modified to N-acetylserine. A CID domain is found at 2-133; it reads SSFSESALEK…QLKLSMEDSK (132 aa). The interval 127–149 is disordered; sequence LSMEDSKSPPPKATEEKKSLKRT. Basic and acidic residues predominate over residues 128-144; the sequence is SMEDSKSPPPKATEEKK. A phosphoserine mark is found at serine 132 and serine 134. Residue tyrosine 161 is modified to Phosphotyrosine. Phosphoserine occurs at positions 166 and 299.

The protein belongs to the UPF0400 (RTT103) family. As to quaternary structure, homodimer. May form a heterodimer with RPRD1A. Associates with RPAP2. Associates with the RNA polymerase II complex. As to expression, preferentially expressed in a range of tumor tissues including colon, lung, liver, breast, prostate, stomach, uterine endometrium and cervical cancers with higher levels in tumors than in adjacent non-tumor tissue (at protein level).

It localises to the nucleus. In terms of biological role, interacts with phosphorylated C-terminal heptapeptide repeat domain (CTD) of the largest RNA polymerase II subunit POLR2A, and participates in dephosphorylation of the CTD by RPAP2. Transcriptional regulator which enhances expression of CCND1. Promotes binding of RNA polymerase II to the CCDN1 promoter and to the termination region before the poly-A site but decreases its binding after the poly-A site. Prevents RNA polymerase II from reading through the 3' end termination site and may allow it to be recruited back to the promoter through promotion of the formation of a chromatin loop. Also enhances the transcription of a number of other cell cycle-related genes including CDK2, CDK4, CDK6 and cyclin-E but not CDKN1A, CDKN1B or cyclin-A. Promotes cell proliferation. The chain is Regulation of nuclear pre-mRNA domain-containing protein 1B (RPRD1B) from Homo sapiens (Human).